The primary structure comprises 577 residues: Guanine nucleotide-binding protein-like 3-like protein (577 aa).

A compositionally biased stretch (basic residues) spans 1-30 (MMKIRHKNKKPGKGSKGCKKPARQNGKKVT). Positions 1 to 75 (MMKIRHKNKK…VAREQERQRH (75 aa)) are disordered. The required for nucleolar localization stretch occupies residues 9–28 (KKPGKGSKGCKKPARQNGKK). The segment covering 42–75 (GNDHASREAELKKKRVEEMREKQQVAREQERQRH) has biased composition (basic and acidic residues). Residues 43 to 103 (NDHASREAEL…QKEEVLQELN (61 aa)) are a coiled coil. A CP-type G domain is found at 118 to 304 (YKEFRKVVEY…LLDAPGIVPG (187 aa)). Residues 166-169 (NKID), 253-260 (GLPNVGKS), and 297-300 (DAPG) each bind GTP.

Belongs to the TRAFAC class YlqF/YawG GTPase family. Interacts with MDM2; this interaction, which occurs in the nucleoplasm, stabilizes MDM2. Indirectly interacts with TP53, via MDM2-binding. Interacts with TERF1; this interaction probably occurs in the nucleoplasm and is increased during mitosis, when the nucleolus is disassembled. This binding may promote TERF1 homodimerization. Interacts with TERT.

Its subcellular location is the nucleus. It is found in the nucleolus. In terms of biological role, stabilizes TERF1 telomeric association by preventing TERF1 recruitment by PML. Stabilizes TERF1 protein by preventing its ubiquitination and hence proteasomal degradation. Does so by interfering with TERF1-binding to FBXO4 E3 ubiquitin-protein ligase. Required for cell proliferation. By stabilizing TRF1 protein during mitosis, promotes metaphase-to-anaphase transition. Stabilizes MDM2 protein by preventing its ubiquitination, and hence proteasomal degradation. By acting on MDM2, may affect TP53 activity. Required for normal processing of ribosomal pre-rRNA. Binds GTP. The chain is Guanine nucleotide-binding protein-like 3-like protein (Gnl3l) from Mus musculus (Mouse).